The primary structure comprises 708 residues: Homeobox-leucine zipper protein HDG10 (708 aa).

The segment at M1–S24 is disordered. A DNA-binding region (homeobox) is located at residues D16 to N75. A coiled-coil region spans residues L119–S141. The segment at G162–S188 is disordered. Polar residues predominate over residues T165–S188. An START domain is found at S218 to L456.

It belongs to the HD-ZIP homeobox family. Class IV subfamily. Interacts with ANT, BBM and AIL1. As to expression, expressed in exclusively in anthers with highest levels in the tapetum and pollen grains.

The protein localises to the nucleus. Functionally, probable transcription factor. In Arabidopsis thaliana (Mouse-ear cress), this protein is Homeobox-leucine zipper protein HDG10.